We begin with the raw amino-acid sequence, 387 residues long: Succinyl-diaminopimelate desuccinylase (387 aa).

Residue histidine 74 participates in Zn(2+) binding. Aspartate 76 is a catalytic residue. Aspartate 107 is a Zn(2+) binding site. Catalysis depends on glutamate 142, which acts as the Proton acceptor. Zn(2+) is bound by residues glutamate 143, glutamate 171, and histidine 360.

It belongs to the peptidase M20A family. DapE subfamily. As to quaternary structure, homodimer. It depends on Zn(2+) as a cofactor. Co(2+) serves as cofactor.

The catalysed reaction is N-succinyl-(2S,6S)-2,6-diaminopimelate + H2O = (2S,6S)-2,6-diaminopimelate + succinate. It functions in the pathway amino-acid biosynthesis; L-lysine biosynthesis via DAP pathway; LL-2,6-diaminopimelate from (S)-tetrahydrodipicolinate (succinylase route): step 3/3. Functionally, catalyzes the hydrolysis of N-succinyl-L,L-diaminopimelic acid (SDAP), forming succinate and LL-2,6-diaminopimelate (DAP), an intermediate involved in the bacterial biosynthesis of lysine and meso-diaminopimelic acid, an essential component of bacterial cell walls. The polypeptide is Succinyl-diaminopimelate desuccinylase (Rhodopseudomonas palustris (strain ATCC BAA-98 / CGA009)).